The following is a 156-amino-acid chain: Large ribosomal subunit protein uL15 (156 aa).

The span at 1-11 shows a compositional bias: basic and acidic residues; the sequence is MKLNDLRDKPG. Residues 1–44 form a disordered region; that stretch reads MKLNDLRDKPGSVKARKRVGRGIGSGTGKTGGRGVKGQKSRSGV. Residues 21 to 35 are compositionally biased toward gly residues; it reads RGIGSGTGKTGGRGV.

Belongs to the universal ribosomal protein uL15 family. Part of the 50S ribosomal subunit.

Its function is as follows. Binds to the 23S rRNA. This chain is Large ribosomal subunit protein uL15, found in Brucella abortus (strain S19).